Consider the following 160-residue polypeptide: Glutathione peroxidase homolog BsaA (160 aa).

The active site involves Cys-35.

Belongs to the glutathione peroxidase family.

This chain is Glutathione peroxidase homolog BsaA (bsaA), found in Bacillus subtilis (strain 168).